The chain runs to 330 residues: Free fatty acid receptor 2 (330 aa).

Over 1-8 (MTPDWHSS) the chain is Extracellular. Residues 9-29 (LILTAYILIFLTGLPANLLAL) form a helical membrane-spanning segment. Residues 30–43 (RAFMGRVRQPQPAP) lie on the Cytoplasmic side of the membrane. The chain crosses the membrane as a helical span at residues 44–64 (VHILLLNLTLADLLLLLLLPF). The Extracellular portion of the chain corresponds to 65 to 79 (RIVEAASNFRWYLPK). Residues 80–100 (IVCALTGFGFYSSIYCSTWLL) form a helical membrane-spanning segment. Topologically, residues 101-126 (AGISMERYLGVAFPVQYKLSRRPLYG) are cytoplasmic. A helical transmembrane segment spans residues 127–147 (VIAALVAWIMSFGHCTIVIIV). At 148 to 184 (QYLNSTEQVGTENQITCYENFTQEQLDVVLPVRLELC) the chain is on the extracellular side. 2 N-linked (GlcNAc...) asparagine glycosylation sites follow: Asn151 and Asn167. The chain crosses the membrane as a helical span at residues 185 to 205 (LVLFFVPMAVTIFCYWRFVWI). At 206–219 (MLTQPHVGAQRRRR) the chain is on the cytoplasmic side. A helical transmembrane segment spans residues 220 to 240 (AVGLAVVTLLNFLVCFGPYNM). Topologically, residues 241 to 255 (SHLVGFYLRQSPSWR) are extracellular. A helical membrane pass occupies residues 256–276 (VEAVVFSSLNASLDPLLFYFS). Residues 277 to 330 (SSVVRRAFGKGLLLIRNPASSMLGRGAKETVEGTKMDRGGSQAEGVQSSEFVTE) are Cytoplasmic-facing. Residues 306–330 (TVEGTKMDRGGSQAEGVQSSEFVTE) form a disordered region. A compositionally biased stretch (polar residues) spans 320 to 330 (EGVQSSEFVTE).

The protein belongs to the G-protein coupled receptor 1 family. In terms of assembly, interacts with FCN1 (via Fibrinogen C-terminal domain). In terms of tissue distribution, highly expressed in hematopoietic tissues, such as spleen and bone marrow, with highest levels in a subset of immune cells, including monocytes or neutrophils. Expressed in adipose tissues with high expression in differentiating adipocytes. Expressed by intestinal endocrine cells.

It is found in the cell membrane. In terms of biological role, g protein-coupled receptor that is activated by a major product of dietary fiber digestion, the short chain fatty acids (SCFAs), and that plays a role in the regulation of whole-body energy homeostasis and in intestinal immunity. In omnivorous mammals, the short chain fatty acids acetate, propionate and butyrate are produced primarily by the gut microbiome that metabolizes dietary fibers. SCFAs serve as a source of energy but also act as signaling molecules. That G protein-coupled receptor is probably coupled to the pertussis toxin-sensitive, G(i/o)-alpha family of G proteins but also to the Gq family. Its activation results in the formation of inositol 1,4,5-trisphosphate, the mobilization of intracellular calcium, the phosphorylation of the MAPK3/ERK1 and MAPK1/ERK2 kinases and the inhibition of intracellular cAMP accumulation. May play a role in glucose homeostasis by regulating the secretion of GLP-1, in response to short-chain fatty acids accumulating in the intestine. May also regulate the production of LEP/Leptin, a hormone acting on the central nervous system to inhibit food intake. Finally, may also regulate whole-body energy homeostasis through adipogenesis regulating both differentiation and lipid storage of adipocytes. In parallel to its role in energy homeostasis, may also mediate the activation of the inflammatory and immune responses by SCFA in the intestine, regulating the rapid production of chemokines and cytokines. May also play a role in the resolution of the inflammatory response and control chemotaxis in neutrophils. In addition to SCFAs, may also be activated by the extracellular lectin FCN1 in a process leading to activation of monocytes and inducing the secretion of interleukin-8/IL-8 in response to the presence of microbes. This is Free fatty acid receptor 2 (Ffar2) from Mus musculus (Mouse).